The chain runs to 255 residues: Imidazole glycerol phosphate synthase subunit HisF (255 aa).

Active-site residues include D12 and D131.

The protein belongs to the HisA/HisF family. As to quaternary structure, heterodimer of HisH and HisF.

The protein resides in the cytoplasm. It carries out the reaction 5-[(5-phospho-1-deoxy-D-ribulos-1-ylimino)methylamino]-1-(5-phospho-beta-D-ribosyl)imidazole-4-carboxamide + L-glutamine = D-erythro-1-(imidazol-4-yl)glycerol 3-phosphate + 5-amino-1-(5-phospho-beta-D-ribosyl)imidazole-4-carboxamide + L-glutamate + H(+). It functions in the pathway amino-acid biosynthesis; L-histidine biosynthesis; L-histidine from 5-phospho-alpha-D-ribose 1-diphosphate: step 5/9. In terms of biological role, IGPS catalyzes the conversion of PRFAR and glutamine to IGP, AICAR and glutamate. The HisF subunit catalyzes the cyclization activity that produces IGP and AICAR from PRFAR using the ammonia provided by the HisH subunit. The polypeptide is Imidazole glycerol phosphate synthase subunit HisF (Vesicomyosocius okutanii subsp. Calyptogena okutanii (strain HA)).